Consider the following 422-residue polypeptide: MRSVLSFALLAANVVSAAVLAPFDYSGYKVVRVPTQKGNVKEVQRIITDLNLDTWKYPKAEGQNADIVIPPSQIPSFMERISGMDREIMHEDLGMSISNETTFEAYSAGYAPDINWFKSYHSYQDHLSYLQDLQGLFRTRSEYVDAGKSHEGRTIPALHLWGKGGKNSKPAIIFHGTIHAREWITTMVTEYMAWSFLSEYNKNADITSIVDNFDIWIFPIVNPDGFAYTQTSNRLWRKNRQPNPGARCPGRDLNRNYPYQWVGPGSSSNPCSDIYRGAEAGDGTEIKVHIANMKKIAAYKGIAMFVDWHSYGQLFMSPYGYSCTARPPTDARHQELSRIFAQALKAVHGTPYKTGPICSTIYQVNGDSVDWALEVLKVKLSLTAELRDTGARGFVLPADQILPSGEETLAGTVAMLKAVIKG.

A signal peptide spans 1–17 (MRSVLSFALLAANVVSA). Positions 18–112 (AVLAPFDYSG…FEAYSAGYAP (95 aa)) are cleaved as a propeptide — activation peptide. A Peptidase M14 domain is found at 119 to 419 (SYHSYQDHLS…AGTVAMLKAV (301 aa)). H179 and E182 together coordinate Zn(2+). Residues 179–182 (HARE), R237, and 254–255 (NR) each bind substrate. A disulfide bridge connects residues C248 and C271. Residue H309 coordinates Zn(2+). 310 to 311 (SY) provides a ligand contact to substrate. The active-site Proton donor/acceptor is E385.

It belongs to the peptidase M14 family. The cofactor is Zn(2+).

The protein localises to the secreted. Its function is as follows. Extracellular metalloprotease that contributes to pathogenicity. This Arthroderma otae (strain ATCC MYA-4605 / CBS 113480) (Microsporum canis) protein is Metallocarboxypeptidase A (MCPA).